Here is a 135-residue protein sequence, read N- to C-terminus: UPF0299 membrane protein Spro_1570 (135 aa).

4 consecutive transmembrane segments (helical) span residues 4–24 (LFTL…CLFA), 30–50 (ALLP…FALL), 63–83 (GCHL…VGVM), and 93–113 (LGPL…VVGY).

It belongs to the UPF0299 family.

The protein localises to the cell inner membrane. In Serratia proteamaculans (strain 568), this protein is UPF0299 membrane protein Spro_1570.